The following is a 232-amino-acid chain: MSDNLKSYQDNHIENEDEEIYERSNGKGKELVDFGKKREPLIHNHEVLNTMQSSVKTLLSSLGEDPDREGLLKTPLRMSKALLFFTQGYEQSVDEVIGEAIFNENHHEMVVVRDIDIFSLCEHHMVPFHGKCHIGYIPDQKVLGLSKLARVAEIFARRLQVQERLTRQIAQAIQAHLNPMGVAVVIEASHMCMVMRGVQKPGASTVTSSVCGIFEKDSRTRAEFFSLIKSNK.

A disordered region spans residues 1–24; sequence MSDNLKSYQDNHIENEDEEIYERS. Residues Cys-121, His-124, and Cys-192 each coordinate Zn(2+).

This sequence belongs to the GTP cyclohydrolase I family. As to quaternary structure, toroid-shaped homodecamer, composed of two pentamers of five dimers.

It carries out the reaction GTP + H2O = 7,8-dihydroneopterin 3'-triphosphate + formate + H(+). It functions in the pathway cofactor biosynthesis; 7,8-dihydroneopterin triphosphate biosynthesis; 7,8-dihydroneopterin triphosphate from GTP: step 1/1. Its function is as follows. First enzyme in the biosynthesis of tetrahydrobiopterin (BH4). Catalyzes the conversion of GTP into dihydroneopterin triphosphate (7,8-dihydroneopterin 3'-triphosphate), which is subsequently catalyzed by 6-pyruvoyltetrahydropterin synthase (ptsA) and sepiapterin reductase (sprA). In Dictyostelium discoideum (Social amoeba), this protein is GTP cyclohydrolase 1 (gchA).